The chain runs to 311 residues: Peptide methionine sulfoxide reductase MsrA/MsrB (311 aa).

Positions 1 to 155 (MAEIYLAGGC…PGGYCHINVN (155 aa)) are peptide methionine sulfoxide reductase A. Residue cysteine 10 is part of the active site. The 124-residue stretch at 172–295 (DAELKEQLTQ…NSAALRFIPK (124 aa)) folds into the MsrB domain. Cysteine 284 (nucleophile) is an active-site residue.

The protein in the N-terminal section; belongs to the MsrA Met sulfoxide reductase family. In the C-terminal section; belongs to the MsrB Met sulfoxide reductase family.

It catalyses the reaction L-methionyl-[protein] + [thioredoxin]-disulfide + H2O = L-methionyl-(S)-S-oxide-[protein] + [thioredoxin]-dithiol. The catalysed reaction is [thioredoxin]-disulfide + L-methionine + H2O = L-methionine (S)-S-oxide + [thioredoxin]-dithiol. The enzyme catalyses L-methionyl-[protein] + [thioredoxin]-disulfide + H2O = L-methionyl-(R)-S-oxide-[protein] + [thioredoxin]-dithiol. Has an important function as a repair enzyme for proteins that have been inactivated by oxidation. Catalyzes the reversible oxidation-reduction of methionine sulfoxide in proteins to methionine. Involved in protection against oxidative stress when the bacterium enters the host bloodstream and required for maximal growth under aerobic and anaerobic conditions. In Streptococcus gordonii (strain Challis / ATCC 35105 / BCRC 15272 / CH1 / DL1 / V288), this protein is Peptide methionine sulfoxide reductase MsrA/MsrB (msrAB).